The sequence spans 1071 residues: DNA-directed RNA polymerase subunit beta (1071 aa).

It belongs to the RNA polymerase beta chain family. In terms of assembly, in plastids the minimal PEP RNA polymerase catalytic core is composed of four subunits: alpha, beta, beta', and beta''. When a (nuclear-encoded) sigma factor is associated with the core the holoenzyme is formed, which can initiate transcription.

It localises to the plastid. The protein resides in the chloroplast. The enzyme catalyses RNA(n) + a ribonucleoside 5'-triphosphate = RNA(n+1) + diphosphate. In terms of biological role, DNA-dependent RNA polymerase catalyzes the transcription of DNA into RNA using the four ribonucleoside triphosphates as substrates. This chain is DNA-directed RNA polymerase subunit beta, found in Acorus calamus (Sweet flag).